A 200-amino-acid polypeptide reads, in one-letter code: Probable GTP-binding protein EngB (200 aa).

An EngB-type G domain is found at 23–197 (KNSEVVFIGR…RERVLKDVLG (175 aa)). GTP contacts are provided by residues 31–38 (GRSNVGKS), 58–62 (GKTQL), 83–86 (DLPG), 153–156 (TKMD), and 175–177 (FTA). 2 residues coordinate Mg(2+): Ser-38 and Thr-60.

It belongs to the TRAFAC class TrmE-Era-EngA-EngB-Septin-like GTPase superfamily. EngB GTPase family. Mg(2+) serves as cofactor.

In terms of biological role, necessary for normal cell division and for the maintenance of normal septation. This Wolinella succinogenes (strain ATCC 29543 / DSM 1740 / CCUG 13145 / JCM 31913 / LMG 7466 / NCTC 11488 / FDC 602W) (Vibrio succinogenes) protein is Probable GTP-binding protein EngB.